We begin with the raw amino-acid sequence, 533 residues long: CTP synthase (533 aa).

The tract at residues 1-265 is amidoligase domain; the sequence is MTKFIFVTGG…PAYLARRLGL (265 aa). S13 contacts CTP. A UTP-binding site is contributed by S13. ATP is bound at residue 14–19; that stretch reads GLGKGI. Y54 serves as a coordination point for L-glutamine. An ATP-binding site is contributed by D71. 2 residues coordinate Mg(2+): D71 and E139. CTP is bound by residues 146–148, 186–191, and K222; these read DIE and KTKPTQ. UTP contacts are provided by residues 186 to 191 and K222; that span reads KTKPTQ. Residues 290 to 532 form the Glutamine amidotransferase type-1 domain; the sequence is EIAIVGKYVK…VEAAKKKKYG (243 aa). G351 contacts L-glutamine. C378 serves as the catalytic Nucleophile; for glutamine hydrolysis. L-glutamine-binding positions include 379-382, E402, and R459; that span reads FGFQ. Catalysis depends on residues H505 and E507.

The protein belongs to the CTP synthase family. In terms of assembly, homotetramer.

It carries out the reaction UTP + L-glutamine + ATP + H2O = CTP + L-glutamate + ADP + phosphate + 2 H(+). The enzyme catalyses L-glutamine + H2O = L-glutamate + NH4(+). It catalyses the reaction UTP + NH4(+) + ATP = CTP + ADP + phosphate + 2 H(+). It participates in pyrimidine metabolism; CTP biosynthesis via de novo pathway; CTP from UDP: step 2/2. Allosterically activated by GTP, when glutamine is the substrate; GTP has no effect on the reaction when ammonia is the substrate. The allosteric effector GTP functions by stabilizing the protein conformation that binds the tetrahedral intermediate(s) formed during glutamine hydrolysis. Inhibited by the product CTP, via allosteric rather than competitive inhibition. In terms of biological role, catalyzes the ATP-dependent amination of UTP to CTP with either L-glutamine or ammonia as the source of nitrogen. Regulates intracellular CTP levels through interactions with the four ribonucleotide triphosphates. This is CTP synthase from Thermococcus kodakarensis (strain ATCC BAA-918 / JCM 12380 / KOD1) (Pyrococcus kodakaraensis (strain KOD1)).